Reading from the N-terminus, the 946-residue chain is Bifunctional glutamine synthetase adenylyltransferase/adenylyl-removing enzyme (946 aa).

The interval 1–440 (MKPLSSPLQQ…VFNELIGDDE (440 aa)) is adenylyl removase. The adenylyl transferase stretch occupies residues 449 to 946 (SEQWRELWQD…ASWQKWLVEE (498 aa)).

It belongs to the GlnE family. The cofactor is Mg(2+).

The catalysed reaction is [glutamine synthetase]-O(4)-(5'-adenylyl)-L-tyrosine + phosphate = [glutamine synthetase]-L-tyrosine + ADP. It carries out the reaction [glutamine synthetase]-L-tyrosine + ATP = [glutamine synthetase]-O(4)-(5'-adenylyl)-L-tyrosine + diphosphate. Involved in the regulation of glutamine synthetase GlnA, a key enzyme in the process to assimilate ammonia. When cellular nitrogen levels are high, the C-terminal adenylyl transferase (AT) inactivates GlnA by covalent transfer of an adenylyl group from ATP to specific tyrosine residue of GlnA, thus reducing its activity. Conversely, when nitrogen levels are low, the N-terminal adenylyl removase (AR) activates GlnA by removing the adenylyl group by phosphorolysis, increasing its activity. The regulatory region of GlnE binds the signal transduction protein PII (GlnB) which indicates the nitrogen status of the cell. The chain is Bifunctional glutamine synthetase adenylyltransferase/adenylyl-removing enzyme from Escherichia coli O127:H6 (strain E2348/69 / EPEC).